The sequence spans 204 residues: dTTP/UTP pyrophosphatase (204 aa).

Asp-68 functions as the Proton acceptor in the catalytic mechanism.

Belongs to the Maf family. YhdE subfamily. A divalent metal cation serves as cofactor.

It localises to the cytoplasm. It catalyses the reaction dTTP + H2O = dTMP + diphosphate + H(+). The catalysed reaction is UTP + H2O = UMP + diphosphate + H(+). Its function is as follows. Nucleoside triphosphate pyrophosphatase that hydrolyzes dTTP and UTP. May have a dual role in cell division arrest and in preventing the incorporation of modified nucleotides into cellular nucleic acids. In Thermotoga maritima (strain ATCC 43589 / DSM 3109 / JCM 10099 / NBRC 100826 / MSB8), this protein is dTTP/UTP pyrophosphatase.